The primary structure comprises 184 residues: Photosystem I assembly protein Ycf4 (184 aa).

A run of 2 helical transmembrane segments spans residues 24–44 and 57–77; these read WAFI…SSYI and IIFF…LFIS.

This sequence belongs to the Ycf4 family.

It localises to the plastid. The protein localises to the chloroplast thylakoid membrane. In terms of biological role, seems to be required for the assembly of the photosystem I complex. The polypeptide is Photosystem I assembly protein Ycf4 (Buxus microphylla (Littleleaf boxwood)).